The primary structure comprises 325 residues: Putative aryl-alcohol dehydrogenase C750.01 (325 aa).

Belongs to the aldo/keto reductase family. Aldo/keto reductase 2 subfamily.

This chain is Putative aryl-alcohol dehydrogenase C750.01, found in Schizosaccharomyces pombe (strain 972 / ATCC 24843) (Fission yeast).